The chain runs to 785 residues: DNA ligase (785 aa).

NAD(+)-binding positions include 32 to 36 (DAEYD), 81 to 82 (SL), and Glu-121. Residue Lys-123 is the N6-AMP-lysine intermediate of the active site. NAD(+) contacts are provided by Arg-144, Glu-181, Lys-294, and Lys-318. Zn(2+) is bound by residues Cys-412, Cys-415, Cys-442, and Cys-448. One can recognise a BRCT domain in the interval 702–785 (VEGLPEAGHT…AFLAKHNIPV (84 aa)).

This sequence belongs to the NAD-dependent DNA ligase family. LigA subfamily. Mg(2+) serves as cofactor. Requires Mn(2+) as cofactor.

It carries out the reaction NAD(+) + (deoxyribonucleotide)n-3'-hydroxyl + 5'-phospho-(deoxyribonucleotide)m = (deoxyribonucleotide)n+m + AMP + beta-nicotinamide D-nucleotide.. DNA ligase that catalyzes the formation of phosphodiester linkages between 5'-phosphoryl and 3'-hydroxyl groups in double-stranded DNA using NAD as a coenzyme and as the energy source for the reaction. It is essential for DNA replication and repair of damaged DNA. The polypeptide is DNA ligase (Pseudomonas fluorescens (strain SBW25)).